We begin with the raw amino-acid sequence, 135 residues long: ATP synthase epsilon chain (135 aa).

The segment at Thr-101–Phe-122 is disordered.

It belongs to the ATPase epsilon chain family. In terms of assembly, F-type ATPases have 2 components, CF(1) - the catalytic core - and CF(0) - the membrane proton channel. CF(1) has five subunits: alpha(3), beta(3), gamma(1), delta(1), epsilon(1). CF(0) has three main subunits: a, b and c.

Its subcellular location is the cellular thylakoid membrane. In terms of biological role, produces ATP from ADP in the presence of a proton gradient across the membrane. This chain is ATP synthase epsilon chain, found in Synechococcus sp. (strain CC9311).